The sequence spans 506 residues: Glutamate--tRNA ligase (506 aa).

Residues 12–22 carry the 'HIGH' region motif; that stretch reads PSPTGDPHVGT. Positions 253 to 257 match the 'KMSKS' region motif; that stretch reads KLSKR. Lys256 lines the ATP pocket.

The protein belongs to the class-I aminoacyl-tRNA synthetase family. Glutamate--tRNA ligase type 1 subfamily. Monomer.

It is found in the cytoplasm. The catalysed reaction is tRNA(Glu) + L-glutamate + ATP = L-glutamyl-tRNA(Glu) + AMP + diphosphate. Functionally, catalyzes the attachment of glutamate to tRNA(Glu) in a two-step reaction: glutamate is first activated by ATP to form Glu-AMP and then transferred to the acceptor end of tRNA(Glu). In Chlamydia trachomatis serovar A (strain ATCC VR-571B / DSM 19440 / HAR-13), this protein is Glutamate--tRNA ligase.